A 133-amino-acid polypeptide reads, in one-letter code: Nickel-responsive regulator (133 aa).

Residues H76, H87, H89, and C95 each coordinate Ni(2+).

It belongs to the transcriptional regulatory CopG/NikR family. As to quaternary structure, homotetramer. The cofactor is Ni(2+).

In terms of biological role, transcriptional repressor of the nikABCDE operon. Is active in the presence of excessive concentrations of intracellular nickel. In Enterobacter sp. (strain 638), this protein is Nickel-responsive regulator.